The sequence spans 321 residues: Biotin synthase (321 aa).

Residues 45-271 enclose the Radical SAM core domain; that stretch reads YYGKKVKLNM…INPTKEIRIA (227 aa). Residues C63, C67, and C70 each coordinate [4Fe-4S] cluster. C106, C139, C199, and R269 together coordinate [2Fe-2S] cluster.

The protein belongs to the radical SAM superfamily. Biotin synthase family. In terms of assembly, homodimer. [4Fe-4S] cluster is required as a cofactor. The cofactor is [2Fe-2S] cluster.

The enzyme catalyses (4R,5S)-dethiobiotin + (sulfur carrier)-SH + 2 reduced [2Fe-2S]-[ferredoxin] + 2 S-adenosyl-L-methionine = (sulfur carrier)-H + biotin + 2 5'-deoxyadenosine + 2 L-methionine + 2 oxidized [2Fe-2S]-[ferredoxin]. The protein operates within cofactor biosynthesis; biotin biosynthesis; biotin from 7,8-diaminononanoate: step 2/2. Catalyzes the conversion of dethiobiotin (DTB) to biotin by the insertion of a sulfur atom into dethiobiotin via a radical-based mechanism. In Staphylococcus epidermidis (strain ATCC 35984 / DSM 28319 / BCRC 17069 / CCUG 31568 / BM 3577 / RP62A), this protein is Biotin synthase.